A 494-amino-acid polypeptide reads, in one-letter code: Alpha-amylase-related protein (494 aa).

An N-terminal signal peptide occupies residues 1-20; sequence MFKFASAVILCVVAASSTLA. Residue glutamine 21 is modified to Pyrrolidone carboxylic acid. An intrachain disulfide couples cysteine 48 to cysteine 104. 3 residues coordinate Ca(2+): asparagine 118, glutamine 169, and aspartate 178. A disulfide bridge links cysteine 157 with cysteine 171. Arginine 206 contributes to the chloride binding site. Catalysis depends on aspartate 208, which acts as the Nucleophile. Histidine 212 contributes to the Ca(2+) binding site. The Proton donor role is filled by glutamate 245. Chloride contacts are provided by asparagine 308 and arginine 343. 3 disulfide bridges follow: cysteine 376/cysteine 382, cysteine 418/cysteine 441, and cysteine 448/cysteine 460.

The protein belongs to the glycosyl hydrolase 13 family. Monomer. Requires Ca(2+) as cofactor. Chloride is required as a cofactor.

It localises to the secreted. The catalysed reaction is Endohydrolysis of (1-&gt;4)-alpha-D-glucosidic linkages in polysaccharides containing three or more (1-&gt;4)-alpha-linked D-glucose units.. This is Alpha-amylase-related protein (Amyrel) from Drosophila varians (Fruit fly).